A 297-amino-acid chain; its full sequence is Protoheme IX farnesyltransferase (297 aa).

The next 9 membrane-spanning stretches (helical) occupy residues 26–46 (VTQLAVFCAVIGMFLATPGMV), 48–68 (YPVLFGGIVGIWLLAGAAFAV), 96–116 (LHIIIFSIILGSLGMIILWNF), 120–140 (LTMWLTLATFVGYAVIYTWLL), 147–167 (NIVIGGLSGAMPPALGWAAVT), 174–194 (AWHLVLIIFVWTPPHFWALAL), 218–238 (LLNIVLYTLILIAATMLPYIY), 245–265 (YLISAIILGLLFLAYVVALFI), and 276–296 (FRFSITYLSLLFAALLVDHYF).

Belongs to the UbiA prenyltransferase family. Protoheme IX farnesyltransferase subfamily.

It is found in the cell inner membrane. It catalyses the reaction heme b + (2E,6E)-farnesyl diphosphate + H2O = Fe(II)-heme o + diphosphate. It participates in porphyrin-containing compound metabolism; heme O biosynthesis; heme O from protoheme: step 1/1. Its function is as follows. Converts heme B (protoheme IX) to heme O by substitution of the vinyl group on carbon 2 of heme B porphyrin ring with a hydroxyethyl farnesyl side group. The chain is Protoheme IX farnesyltransferase from Polynucleobacter necessarius subsp. necessarius (strain STIR1).